We begin with the raw amino-acid sequence, 279 residues long: Tryptophan 2,3-dioxygenase (279 aa).

Substrate-binding positions include 48–52, Tyr-110, and Arg-114; that span reads FIVIH. His-237 lines the heme pocket. Thr-251 serves as a coordination point for substrate.

Belongs to the tryptophan 2,3-dioxygenase family. In terms of assembly, homotetramer. Requires heme as cofactor.

It catalyses the reaction L-tryptophan + O2 = N-formyl-L-kynurenine. It functions in the pathway amino-acid degradation; L-tryptophan degradation via kynurenine pathway; L-kynurenine from L-tryptophan: step 1/2. Its function is as follows. Heme-dependent dioxygenase that catalyzes the oxidative cleavage of the L-tryptophan (L-Trp) pyrrole ring and converts L-tryptophan to N-formyl-L-kynurenine. Catalyzes the oxidative cleavage of the indole moiety. In Bacillus cereus (strain ATCC 10987 / NRS 248), this protein is Tryptophan 2,3-dioxygenase.